The following is a 128-amino-acid chain: Claw keratin (128 aa).

Repeat copies occupy residues 83 to 91 (GGYGGLGGY) and 92 to 100 (GGYGGLGGY). The segment at 83–104 (GGYGGLGGYGGYGGLGGYGGYG) is 3 X 9 AA tandem repeats, Gly-rich. One copy of the 3; approximate repeat lies at 101 to 109 (GGYGGFGSC).

The protein belongs to the avian keratin family. As to expression, abundantly expressed in the claw and at a low level in feather tissue.

The polypeptide is Claw keratin (CKER1) (Gallus gallus (Chicken)).